The sequence spans 325 residues: MATH domain and coiled-coil domain-containing protein At3g58340 (325 aa).

An MATH domain is found at 6-131; that stretch reads DKKFCWEIKN…NGQVMIVAEV (126 aa). The stretch at 266–315 forms a coiled coil; sequence KVDWLEKKLDHVKEKKEKEQSGLIILQGIEQQLHELMHKCEKKKSEVLSV.

The chain is MATH domain and coiled-coil domain-containing protein At3g58340 from Arabidopsis thaliana (Mouse-ear cress).